A 264-amino-acid polypeptide reads, in one-letter code: Acyl-[acyl-carrier-protein]--UDP-N-acetylglucosamine O-acyltransferase (264 aa).

This sequence belongs to the transferase hexapeptide repeat family. LpxA subfamily. Homotrimer.

The protein localises to the cytoplasm. It catalyses the reaction a (3R)-hydroxyacyl-[ACP] + UDP-N-acetyl-alpha-D-glucosamine = a UDP-3-O-[(3R)-3-hydroxyacyl]-N-acetyl-alpha-D-glucosamine + holo-[ACP]. It participates in glycolipid biosynthesis; lipid IV(A) biosynthesis; lipid IV(A) from (3R)-3-hydroxytetradecanoyl-[acyl-carrier-protein] and UDP-N-acetyl-alpha-D-glucosamine: step 1/6. Its function is as follows. Involved in the biosynthesis of lipid A, a phosphorylated glycolipid that anchors the lipopolysaccharide to the outer membrane of the cell. The protein is Acyl-[acyl-carrier-protein]--UDP-N-acetylglucosamine O-acyltransferase of Rickettsia felis (strain ATCC VR-1525 / URRWXCal2) (Rickettsia azadi).